Reading from the N-terminus, the 3119-residue chain is Huntingtin (3119 aa).

A disordered region spans residues 1–65 (MATLEKLMKA…LPGPAEEPLH (65 aa)). Position 9 is an N6-acetyllysine (Lys9). Residues 24–60 (QPPPQAPPPPPPPPPQPPQPPPQGQPPPPPPPLPGPA) are compositionally biased toward pro residues. Residues Lys155 and Lys213 each carry the N6-acetyllysine modification. HEAT repeat units lie at residues 183-220 (PYLV…SFGN) and 225-262 (NEIK…HSRR). Lys322 bears the N6-acetyllysine mark. 3 positions are modified to phosphoserine: Ser396, Ser398, and Ser411. N6-acetyllysine is present on Lys421. Positions 470–481 (GHDIITEQPRSQ) are interaction with ZDHHC17. Residues 495 to 558 (DLTSAATDGD…DSAVTPSDSS (64 aa)) form a disordered region. A compositionally biased stretch (polar residues) spans 529–558 (DGTQASSPISDSSQTTTEGPDSAVTPSDSS). A lipid anchor (N-myristoyl glycine) is attached at Gly530. A phosphoserine mark is found at Ser620 and Ser623. 2 HEAT repeats span residues 782 to 819 (FSLV…SLCS) and 882 to 920 (KLQE…KLFY). The tract at residues 1146-1204 (KAALPSLTNPPSLSPIRRKGKEKEPGEQASTPMSPKKVGEASAASRQSDTSGPVTASKS) is disordered. Over residues 1149–1160 (LPSLTNPPSLSP) the composition is skewed to low complexity. Ser1159 and Ser1179 each carry phosphoserine; by CDK5. The span at 1189 to 1204 (ASRQSDTSGPVTASKS) shows a compositional bias: polar residues. Residues 1404-1441 (LFEPLVIKALKQYTTTTSVQLQKQVLDLLAQLVQLRVN) form an HEAT 5 repeat. Ser1853 carries the post-translational modification Phosphoserine. Residues 2372-2381 (IVISLARLPL) carry the Nuclear export signal motif. Residues 2610-2637 (EEEWDEEEEEESDVPAPTSPPVSPVNSR) are disordered. Residues 2611–2622 (EEWDEEEEEESD) are compositionally biased toward acidic residues.

Belongs to the huntingtin family. As to quaternary structure, interacts with PFN1. Interacts through its N-terminus with PRPF40A. Interacts with PQBP1. Interacts with SETD2. Interacts with SH3GLB1. Interacts with SYVN. Interacts with TPR; the interaction is inhibited by forms of Huntingtin with expanded polyglutamine stretch. Interacts with ZDHHC13 (via ANK repeats). Interacts with ZDHHC17 (via ANK repeats). Interacts with F8A1/F8A2/F8A3. Found in a complex with F8A1/F8A2/F8A3, HTT and RAB5A; mediates the recruitment of HTT by RAB5A. In terms of processing, phosphorylation at Ser-1159 and Ser-1179 by CDK5 in response to DNA damage in nuclei of neurons protects neurons against polyglutamine expansion as well as DNA damage mediated toxicity. Post-translationally, cleaved by caspases downstream of the polyglutamine stretch. Myristoylated at Gly-530, following proteolytic cleavage at Asp-529. The highest level is seen throughout the brain, but it is also found in the stomach, heart, testis, adipose tissue, muscle, spleen, liver, and kidney.

It localises to the cytoplasm. Its subcellular location is the nucleus. The protein resides in the cytoplasmic vesicle. It is found in the autophagosome. May play a role in microtubule-mediated transport or vesicle function. In terms of biological role, promotes the formation of autophagic vesicles. The polypeptide is Huntingtin (Htt) (Mus musculus (Mouse)).